Here is a 719-residue protein sequence, read N- to C-terminus: Plasmin and fibronectin-binding protein A (719 aa).

The first 45 residues, 1–45, serve as a signal peptide directing secretion; sequence MLKIVKKLEVLMKYFVPNEVFSIRKLKVGTCSVLLAISILGSQGI. 2 disordered regions span residues 56–76 and 109–128; these read PMATKESSNAITNDLDNSPTV and IRSNSQLDNRTVESTVTSTN. PbH1 repeat units lie at residues 287–310, 362–384, 397–419, 497–523, and 525–546; these read SNNVTIKNVTFKDSYQGHAIQIAG, SENVTIQNSYFGKSDKSGELVTA, PSNIKILNNHFDNMMYAGVRFTG, VSDITVTKNVINNNSKETEQPNIELLR, and SDNLVVSENSIFGGKEGIVIED. Residues 601-658 adopt a coiled-coil conformation; sequence NNLSDKNEKEKNKEEKQSNSNNVIDSNQKNGEFNSSKDNRQMNDKIDNKQDNKTEEVN. Over residues 606 to 617 the composition is skewed to basic and acidic residues; sequence KNEKEKNKEEKQ. A disordered region spans residues 606–655; it reads KNEKEKNKEEKQSNSNNVIDSNQKNGEFNSSKDNRQMNDKIDNKQDNKTE. The segment covering 623–634 has biased composition (polar residues); sequence VIDSNQKNGEFN. Basic and acidic residues predominate over residues 635-655; sequence SSKDNRQMNDKIDNKQDNKTE. The short motif at 685–689 is the LPXTG sorting signal element; it reads LPKTG. Threonine 688 bears the Pentaglycyl murein peptidoglycan amidated threonine mark. Positions 689–719 are cleaved as a propeptide — removed by sortase; that stretch reads GSNKIMELFLTVTGIGLLLTLKGLKYYGKDK.

It is found in the secreted. It localises to the cell wall. Functionally, acts as a fibronectin-dependent adhesin and invasin. Binds host (in this case human) fibronectin, plasmin, plasminogen, and human serum albumin. Where the bacteria adhere to human cells there is major recruitment of microvilli which seem to fuse to cover the streptococcal chains. Antibodies to this protein reduce bacterial growth in human blood. The protein is Plasmin and fibronectin-binding protein A (pfbA) of Streptococcus pneumoniae (strain ATCC BAA-255 / R6).